Reading from the N-terminus, the 225-residue chain is Probable GTP-binding protein EngB (225 aa).

Residues 31-204 form the EngB-type G domain; the sequence is VGVEIAFAGR…LGILDSWCKP (174 aa). GTP is bound by residues 39 to 46, 65 to 69, 83 to 86, 150 to 153, and 183 to 185; these read GRSNAGKS, GRTQL, DLPG, TKAD, and FSS. Mg(2+) is bound by residues S46 and T67.

This sequence belongs to the TRAFAC class TrmE-Era-EngA-EngB-Septin-like GTPase superfamily. EngB GTPase family. The cofactor is Mg(2+).

Necessary for normal cell division and for the maintenance of normal septation. In Shewanella pealeana (strain ATCC 700345 / ANG-SQ1), this protein is Probable GTP-binding protein EngB.